Reading from the N-terminus, the 615-residue chain is Elongation factor 4 (615 aa).

In terms of domain architecture, tr-type G spans 14–196; sequence AMIRNFCIIA…EIVRQVPAPV (183 aa). Residues 26–31 and 143–146 each bind GTP; these read DHGKST and NKID.

Belongs to the TRAFAC class translation factor GTPase superfamily. Classic translation factor GTPase family. LepA subfamily.

It is found in the cell membrane. The catalysed reaction is GTP + H2O = GDP + phosphate + H(+). Functionally, required for accurate and efficient protein synthesis under certain stress conditions. May act as a fidelity factor of the translation reaction, by catalyzing a one-codon backward translocation of tRNAs on improperly translocated ribosomes. Back-translocation proceeds from a post-translocation (POST) complex to a pre-translocation (PRE) complex, thus giving elongation factor G a second chance to translocate the tRNAs correctly. Binds to ribosomes in a GTP-dependent manner. The chain is Elongation factor 4 from Frankia alni (strain DSM 45986 / CECT 9034 / ACN14a).